We begin with the raw amino-acid sequence, 138 residues long: Putative ribonuclease VapC45 (138 aa).

Its function is as follows. Toxic component of a type II toxin-antitoxin (TA) system. An RNase. The cognate antitoxin is VapB45. This chain is Putative ribonuclease VapC45, found in Mycobacterium tuberculosis (strain ATCC 25618 / H37Rv).